The primary structure comprises 266 residues: MGSTQSVSGTPARPLPRNKQVARVADPRSPSAGIQRTPIQVESSPQPSLPAEQLNGLKQAQDPDPRSPTLGIARTPMKISGPDPQCSLVKELSEVLETEASESISSPELALPRETPLFYDLDLSSDPQLSPEDQLLPWSQAELDPKQVFTKEEAKQSAETIAASQNSDKPSRDPETPQSSGSKRSRRKANSKVLGRSPLTILQDDNSPGTLTLRQGKRPSALSENVKDLKEGVVLGTGRFLKAGGGAREPNQDHDKENQHFALLES.

Positions 1 to 84 (MGSTQSVSGT…TPMKISGPDP (84 aa)) are disordered. Residues Ser29 and Ser31 each carry the phosphoserine modification. A compositionally biased stretch (polar residues) spans 32 to 46 (AGIQRTPIQVESSPQ). At Thr37 the chain carries Phosphothreonine. 2 positions are modified to phosphoserine: Ser44 and Ser67. Thr75 is subject to Phosphothreonine. An F-box-like region spans residues 90 to 119 (KELSEVLETEASESISSPELALPRETPLFY). Position 93 is a phosphoserine (Ser93). Disordered stretches follow at residues 120–225 (DLDL…LSEN) and 242–266 (KAGGGAREPNQDHDKENQHFALLES). Residues 143–156 (LDPKQVFTKEEAKQ) are compositionally biased toward basic and acidic residues. The segment covering 157 to 168 (SAETIAASQNSD) has biased composition (polar residues). A Phosphoserine modification is found at Ser197. Position 200 is a phosphothreonine (Thr200). Over residues 203–213 (QDDNSPGTLTL) the composition is skewed to polar residues. The residue at position 207 (Ser207) is a Phosphoserine. The residue at position 210 (Thr210) is a Phosphothreonine. Positions 250 to 259 (PNQDHDKENQ) are enriched in basic and acidic residues. The short motif at 256–258 (KEN) is the KEN box element.

Interacts with SKP1. Part of a SCF (SKP1-cullin-F-box) protein ligase complex. Post-translationally, ubiquitinated and degraded by the APC/C-Cdh1 complex.

It localises to the cytoplasm. The protein resides in the cytosol. It participates in protein modification; protein ubiquitination. In terms of biological role, F-box-like protein which is required for entry into mitosis. Acts by participating in E3 ligase complexes that mediate the ubiquitination and degradation of WEE1 kinase at G2/M phase. The chain is Cell division cycle-associated protein 3 (Cdca3) from Mus musculus (Mouse).